The sequence spans 387 residues: Homoserine O-succinyltransferase (387 aa).

In terms of domain architecture, AB hydrolase-1 spans 45 to 354 (NAVLVCHALN…DAPHGHDAFL (310 aa)). Serine 151 (nucleophile) is an active-site residue. Arginine 221 contributes to the substrate binding site. Residues aspartate 317 and histidine 350 contribute to the active site. Substrate is bound at residue aspartate 351.

This sequence belongs to the AB hydrolase superfamily. MetX family. As to quaternary structure, homodimer.

It is found in the cytoplasm. The enzyme catalyses L-homoserine + succinyl-CoA = O-succinyl-L-homoserine + CoA. It functions in the pathway amino-acid biosynthesis; L-methionine biosynthesis via de novo pathway; O-succinyl-L-homoserine from L-homoserine: step 1/1. Functionally, transfers a succinyl group from succinyl-CoA to L-homoserine, forming succinyl-L-homoserine. The polypeptide is Homoserine O-succinyltransferase (Methylibium petroleiphilum (strain ATCC BAA-1232 / LMG 22953 / PM1)).